The primary structure comprises 188 residues: dCTP deaminase (188 aa).

A dCTP-binding site is contributed by 109–114 (KSTYAR). E135 serves as the catalytic Proton donor/acceptor. 3 residues coordinate dCTP: Q154, Y168, and Q178.

It belongs to the dCTP deaminase family. As to quaternary structure, homotrimer.

It catalyses the reaction dCTP + H2O + H(+) = dUTP + NH4(+). It participates in pyrimidine metabolism; dUMP biosynthesis; dUMP from dCTP (dUTP route): step 1/2. In terms of biological role, catalyzes the deamination of dCTP to dUTP. The chain is dCTP deaminase from Helicobacter pylori (strain G27).